Consider the following 1180-residue polypeptide: Phosphatidylinositol 4-kinase (1180 aa).

One can recognise a PIK helical domain in the interval 1–206; that stretch reads MNKISDTIII…SVYLHSPSTS (206 aa). Disordered stretches follow at residues 15-84, 257-327, 355-391, 768-799, and 832-894; these read NEDE…KHKE, ENDH…ENDN, TSPIKDDMENNNNNNNNNNNNNNNNNNNNNINNNNIN, TISNSSDSCTTETTTTSPVATSPTLPINIPHS, and AISP…SPFG. Residues 38–74 are compositionally biased toward low complexity; sequence NNNNNNILTNVNNNKNNTITSSGGSDSSSSSSNNNNN. A compositionally biased stretch (basic residues) spans 75 to 84; that stretch reads KIKKSKKHKE. Residues 257–270 are compositionally biased toward basic and acidic residues; sequence ENDHHIENDPKKDI. 4 stretches are compositionally biased toward low complexity: residues 271-325, 364-391, 768-793, and 835-879; these read NSNN…SGEN, NNNNNNNNNNNNNNNNNNNNNINNNNIN, TISNSSDSCTTETTTTSPVATSPTLP, and PPSQ…SPTN. Residues 895 to 1164 form the PI3K/PI4K catalytic domain; it reads ESWQEKIERY…LISYSIDHFK (270 aa). A G-loop region spans residues 901–907; that stretch reads IERYKKI. The catalytic loop stretch occupies residues 1030-1038; sequence QIKDRHNGN. The interval 1049-1073 is activation loop; sequence HIDFGFILSNSPGNISFESAPFKLT.

Belongs to the PI3/PI4-kinase family. Type III PI4K subfamily.

The enzyme catalyses a 1,2-diacyl-sn-glycero-3-phospho-(1D-myo-inositol) + ATP = a 1,2-diacyl-sn-glycero-3-phospho-(1D-myo-inositol 4-phosphate) + ADP + H(+). Functionally, acts on phosphatidylinositol (PtdIns) in the first committed step in the production of the second messenger inositol-1,4,5,-trisphosphate. The chain is Phosphatidylinositol 4-kinase (pikD) from Dictyostelium discoideum (Social amoeba).